The primary structure comprises 286 residues: Thiazole synthase (286 aa).

The Schiff-base intermediate with DXP role is filled by Lys122. 1-deoxy-D-xylulose 5-phosphate-binding positions include Gly183, 209-210 (AG), and 231-232 (NT).

This sequence belongs to the ThiG family. Homotetramer. Forms heterodimers with either ThiH or ThiS.

The protein localises to the cytoplasm. It carries out the reaction [ThiS sulfur-carrier protein]-C-terminal-Gly-aminoethanethioate + 2-iminoacetate + 1-deoxy-D-xylulose 5-phosphate = [ThiS sulfur-carrier protein]-C-terminal Gly-Gly + 2-[(2R,5Z)-2-carboxy-4-methylthiazol-5(2H)-ylidene]ethyl phosphate + 2 H2O + H(+). It functions in the pathway cofactor biosynthesis; thiamine diphosphate biosynthesis. Its function is as follows. Catalyzes the rearrangement of 1-deoxy-D-xylulose 5-phosphate (DXP) to produce the thiazole phosphate moiety of thiamine. Sulfur is provided by the thiocarboxylate moiety of the carrier protein ThiS. In vitro, sulfur can be provided by H(2)S. The polypeptide is Thiazole synthase (Synechococcus elongatus (strain ATCC 33912 / PCC 7942 / FACHB-805) (Anacystis nidulans R2)).